The following is an 851-amino-acid chain: DNA mismatch repair protein MutS (851 aa).

602–609 (GPNMSGKS) contributes to the ATP binding site.

This sequence belongs to the DNA mismatch repair MutS family.

In terms of biological role, this protein is involved in the repair of mismatches in DNA. It is possible that it carries out the mismatch recognition step. This protein has a weak ATPase activity. The chain is DNA mismatch repair protein MutS from Streptococcus pyogenes serotype M28 (strain MGAS6180).